The chain runs to 946 residues: Bifunctional glutamine synthetase adenylyltransferase/adenylyl-removing enzyme (946 aa).

Positions 1-440 (MKPLSSPLQQ…VFNELIGDDE (440 aa)) are adenylyl removase. An adenylyl transferase region spans residues 449-946 (SEQWRELWQD…ASWQKWLVEE (498 aa)).

The protein belongs to the GlnE family. Mg(2+) serves as cofactor.

It catalyses the reaction [glutamine synthetase]-O(4)-(5'-adenylyl)-L-tyrosine + phosphate = [glutamine synthetase]-L-tyrosine + ADP. The enzyme catalyses [glutamine synthetase]-L-tyrosine + ATP = [glutamine synthetase]-O(4)-(5'-adenylyl)-L-tyrosine + diphosphate. In terms of biological role, involved in the regulation of glutamine synthetase GlnA, a key enzyme in the process to assimilate ammonia. When cellular nitrogen levels are high, the C-terminal adenylyl transferase (AT) inactivates GlnA by covalent transfer of an adenylyl group from ATP to specific tyrosine residue of GlnA, thus reducing its activity. Conversely, when nitrogen levels are low, the N-terminal adenylyl removase (AR) activates GlnA by removing the adenylyl group by phosphorolysis, increasing its activity. The regulatory region of GlnE binds the signal transduction protein PII (GlnB) which indicates the nitrogen status of the cell. The protein is Bifunctional glutamine synthetase adenylyltransferase/adenylyl-removing enzyme of Escherichia coli (strain SE11).